A 273-amino-acid polypeptide reads, in one-letter code: Putative pyruvate, phosphate dikinase regulatory protein (273 aa).

149 to 156 (GPSRTSKT) provides a ligand contact to ADP.

It belongs to the pyruvate, phosphate/water dikinase regulatory protein family. PDRP subfamily.

The enzyme catalyses N(tele)-phospho-L-histidyl/L-threonyl-[pyruvate, phosphate dikinase] + ADP = N(tele)-phospho-L-histidyl/O-phospho-L-threonyl-[pyruvate, phosphate dikinase] + AMP + H(+). The catalysed reaction is N(tele)-phospho-L-histidyl/O-phospho-L-threonyl-[pyruvate, phosphate dikinase] + phosphate + H(+) = N(tele)-phospho-L-histidyl/L-threonyl-[pyruvate, phosphate dikinase] + diphosphate. Its function is as follows. Bifunctional serine/threonine kinase and phosphorylase involved in the regulation of the pyruvate, phosphate dikinase (PPDK) by catalyzing its phosphorylation/dephosphorylation. This Rickettsia bellii (strain OSU 85-389) protein is Putative pyruvate, phosphate dikinase regulatory protein.